A 786-amino-acid chain; its full sequence is Myosin light chain kinase 3 (786 aa).

Phosphoserine is present on serine 155. Disordered stretches follow at residues 233 to 258 (EALD…SEDT), 279 to 315 (RMSQ…IHSD), and 333 to 443 (ELFE…GRRV). A compositionally biased stretch (polar residues) spans 279–293 (RMSQSAGEGTSSSKP). Serine 341 and serine 422 each carry phosphoserine. Residues 482 to 737 (VSQHEVLGGG…ATQCLKHEWL (256 aa)) form the Protein kinase domain. Residues 488-496 (LGGGRFGQV) and lysine 511 each bind ATP. Aspartate 603 functions as the Proton acceptor in the catalytic mechanism.

Belongs to the protein kinase superfamily. CAMK Ser/Thr protein kinase family. Mg(2+) is required as a cofactor. Post-translationally, phosphorylated on serine residues. As to expression, expressed in cardiomyocytes (at protein level). Up-regulated in heart after experimental myocardial infarction at the mRNA level.

Its subcellular location is the cytoplasm. It carries out the reaction L-seryl-[myosin light chain] + ATP = O-phospho-L-seryl-[myosin light chain] + ADP + H(+). It catalyses the reaction L-threonyl-[myosin light chain] + ATP = O-phospho-L-threonyl-[myosin light chain] + ADP + H(+). Functionally, calmodulin-dependent kinase that phosphorylates MYL2 in vitro. Promotes sarcomere formation in cardiomyocytes. Increases cardiomyocyte contractility. This Rattus norvegicus (Rat) protein is Myosin light chain kinase 3 (Mylk3).